The primary structure comprises 102 residues: ATP-dependent Clp protease adapter protein ClpS (102 aa).

This sequence belongs to the ClpS family. As to quaternary structure, binds to the N-terminal domain of the chaperone ClpA.

In terms of biological role, involved in the modulation of the specificity of the ClpAP-mediated ATP-dependent protein degradation. This chain is ATP-dependent Clp protease adapter protein ClpS, found in Shewanella woodyi (strain ATCC 51908 / MS32).